The primary structure comprises 354 residues: Muscleblind-like protein 3 (354 aa).

C3H1-type zinc fingers lie at residues 14-42 (WLTLEVCREFQRGTCSRADADCKFAHPPR), 48-74 (NGRVVACFDSLKGRCTRENCKYLHPPP), 174-202 (SDKLEVCREFQRGNCTRGENDCRYAHPTD), and 210-236 (DNTVTICMDYIKGRCSREKCKYFHPPA).

It belongs to the muscleblind family. In terms of tissue distribution, highly expressed in the placenta.

The protein resides in the nucleus. It is found in the cytoplasm. Functionally, mediates pre-mRNA alternative splicing regulation. Acts either as activator or repressor of splicing on specific pre-mRNA targets. Inhibits cardiac troponin-T (TNNT2) pre-mRNA exon inclusion but induces insulin receptor (IR) pre-mRNA exon inclusion in muscle. Antagonizes the alternative splicing activity pattern of CELF proteins. May play a role in myotonic dystrophy pathophysiology (DM). Could inhibit terminal muscle differentiation, acting at approximately the time of myogenin induction. The protein is Muscleblind-like protein 3 (MBNL3) of Homo sapiens (Human).